Consider the following 393-residue polypeptide: Zinc finger CCHC domain-containing protein 18 (393 aa).

2 disordered regions span residues 281–300 (VEPE…RGTA) and 313–341 (DDFD…RTRK). 2 stretches are compositionally biased toward polar residues: residues 291-300 (PGASSLRGTA) and 320-331 (PSTSSGSGQRNN). The segment at 346 to 363 (IRCPHCGEEGHAKETCDN) adopts a CCHC-type zinc-finger fold.

It belongs to the ZCCHC12 family.

The polypeptide is Zinc finger CCHC domain-containing protein 18 (Mus musculus (Mouse)).